The chain runs to 1519 residues: Dicer-like protein 1 (1519 aa).

Positions 1–13 are enriched in polar residues; it reads MTHQNTETASLAT. The disordered stretch occupies residues 1-62; it reads MTHQNTETAS…KDPSQRQRQQ (62 aa). A compositionally biased stretch (acidic residues) spans 39-48; the sequence is SDESEGSEEE. One can recognise a Helicase ATP-binding domain in the interval 116 to 297; sequence LFERAKVQNT…EAARNLEALL (182 aa). 129-136 is a binding site for ATP; sequence LDTGSGKT. Positions 242–245 match the DEAH box motif; it reads DEAH. The 171-residue stretch at 431–601 folds into the Helicase C-terminal domain; it reads ALSSKVRVLW…QLLPEDRILH (171 aa). Positions 634–724 constitute a Dicer dsRNA-binding fold domain; the sequence is AITVLARYAS…NSVYHRRLPA (91 aa). The PAZ domain maps to 882–1001; that stretch reads DDIEYQADMP…ICIEPLKISA (120 aa). RNase III domains follow at residues 1026–1184 and 1235–1387; these read GLEA…LTPG and CRRV…VDSN. 3 residues coordinate Mg(2+): Glu1275, Asp1373, and Glu1376. The 69-residue stretch at 1421–1489 folds into the DRBM domain; it reads TFLHNKLTNE…SENALTELLH (69 aa). Zn(2+)-binding residues include Cys1433, His1460, Cys1501, and Cys1503.

This sequence belongs to the helicase family. Dicer subfamily. The cofactor is Mg(2+). It depends on Mn(2+) as a cofactor.

Functionally, dicer-like endonuclease involved in cleaving double-stranded RNA in the RNA interference (RNAi) pathway. Produces 21 to 25 bp dsRNAs (siRNAs) which target the selective destruction of homologous RNAs leading to sequence-specific suppression of gene expression, called post-transcriptional gene silencing (PTGS). Part of a broad host defense response against viral infection and transposons. This chain is Dicer-like protein 1 (dcl1), found in Aspergillus terreus (strain NIH 2624 / FGSC A1156).